Here is a 386-residue protein sequence, read N- to C-terminus: MLSGQAAIVGIGATDFSKNSGRSELRLAAEAVLDALADAGLSPTDVDGLTTFTMDTNTEIAVARAAGIGELTFFSKIHYGGGAACATVQHAAMAVATGVADVVVAYRAFNERSGMRFGQVQTRLTENADSTGVDNSFSYPHGLSTPAAQVAMIARRYMHLSGATSRDFGAVSVADRKHAANNPKAYFYGKPITIEDHQNSRWIAEPLRLLDCCQETDGAVAIVVTSAARARDLKQRPVVIEAAAQGCSPDQYTMVSYYRPELDGLPEMGLVGRQLWAQSGLTPADVQTAVLYDHFTPFTLIQLEELGFCGKGEAKDFIADGAIEVGGRLPINTHGGQLGEAYIHGMNGIAEGVRQLRGTSVNPVAGVEHVLVTAGTGVPTSGLILG.

The active-site Proton acceptor is tyrosine 292. Tyrosine 342 acts as the Proton donor in catalysis.

Belongs to the thiolase-like superfamily. As to quaternary structure, homodimer. Interacts with the ChsH1/ChsH2 hydratase via the DUF35 C-terminal region of ChsH2 (ChsH2-DUF35). The ChsH1-ChsH2-Ltp2 protein complex is composed of two protomers that form a heterohexameric structure through the Ltp2 dimerization interface.

The enzyme catalyses 17-hydroxy-3-oxochol-4-en-22-oyl-CoA = androst-4-ene-3,17-dione + propanoyl-CoA. The protein operates within steroid metabolism; cholesterol degradation. Functionally, involved in cholesterol side chain degradation. When associated with the ChsH1/ChsH2 hydratase, catalyzes the retroaldol cleavage of 17-hydroxy-3-oxo-4-pregnene-20-carboxyl-CoA (17-HOPC-CoA) produced by the hydratase, forming androst-4-ene-3,17-dione and propionyl-CoA. The polypeptide is 17-hydroxy-3-oxo-4-pregnene-20-carboxyl-CoA lyase (Mycobacterium tuberculosis (strain ATCC 25618 / H37Rv)).